The chain runs to 132 residues: Profilin-1 (132 aa).

This sequence belongs to the profilin family. In terms of assembly, occurs in many kinds of cells as a complex with monomeric actin in a 1:1 ratio. In terms of tissue distribution, expressed in the nerve ring during late embryonic stages. In adults, expression is seen in the neurons, vulva and somatic gonad.

It localises to the cytoplasm. Its subcellular location is the cytoskeleton. Functionally, binds to actin and affects the structure of the cytoskeleton. At high concentrations, profilin prevents the polymerization of actin, whereas it enhances it at low concentrations. By binding to PIP2, it inhibits the formation of IP3 and DG. Also binds to poly(L-proline) and phosphatidylinositol 4,5-bisphosphate micelles. This is Profilin-1 (pfn-1) from Caenorhabditis elegans.